Reading from the N-terminus, the 233-residue chain is Purine nucleoside phosphorylase DeoD-type (233 aa).

Residue His-4 participates in a purine D-ribonucleoside binding. Phosphate-binding positions include Gly-20, Arg-24, Arg-43, and 87-90 (RIGT). A purine D-ribonucleoside contacts are provided by residues 179–181 (EME) and 203–204 (SD). The active-site Proton donor is the Asp-204.

It belongs to the PNP/UDP phosphorylase family. In terms of assembly, homohexamer; trimer of homodimers.

The catalysed reaction is a purine D-ribonucleoside + phosphate = a purine nucleobase + alpha-D-ribose 1-phosphate. It catalyses the reaction a purine 2'-deoxy-D-ribonucleoside + phosphate = a purine nucleobase + 2-deoxy-alpha-D-ribose 1-phosphate. Its function is as follows. Catalyzes the reversible phosphorolytic breakdown of the N-glycosidic bond in the beta-(deoxy)ribonucleoside molecules, with the formation of the corresponding free purine bases and pentose-1-phosphate. The sequence is that of Purine nucleoside phosphorylase DeoD-type from Helicobacter acinonychis (strain Sheeba).